Consider the following 318-residue polypeptide: Gamma-glutamyl hydrolase (318 aa).

Residues Met-1–Ser-24 form the signal peptide. Residues Ala-25–Asp-318 form the Gamma-glutamyl hydrolase domain. A glycan (N-linked (GlcNAc...) asparagine) is linked at Asn-116. Catalysis depends on Cys-134, which acts as the Nucleophile. Residues Asn-163 and Asn-203 are each glycosylated (N-linked (GlcNAc...) asparagine). The active-site Proton donor is His-244. Asn-307 carries N-linked (GlcNAc...) asparagine glycosylation.

The protein belongs to the peptidase C26 family. As to quaternary structure, homodimer.

The protein localises to the secreted. It localises to the extracellular space. Its subcellular location is the lysosome. It is found in the melanosome. The catalysed reaction is (6S)-5,6,7,8-tetrahydrofolyl-(gamma-L-Glu)(n) + (n-1) H2O = (6S)-5,6,7,8-tetrahydrofolate + (n-1) L-glutamate. In terms of biological role, hydrolyzes the polyglutamate sidechains of pteroylpolyglutamates. Progressively removes gamma-glutamyl residues from pteroylpoly-gamma-glutamate to yield pteroyl-alpha-glutamate (folic acid) and free glutamate. May play an important role in the bioavailability of dietary pteroylpolyglutamates and in the metabolism of pteroylpolyglutamates and antifolates. Exhibits either endo- or exopeptidase activity depending upon the tissue of origin. When secreted, it acts primarily as an endopeptidase. In Bos taurus (Bovine), this protein is Gamma-glutamyl hydrolase (GGH).